Here is a 463-residue protein sequence, read N- to C-terminus: Mitochondrial dynamics protein MIEF1 (463 aa).

The Mitochondrial intermembrane segment spans residues 1-23 (MAGAGERKGKKDDNGIGTAIDFV). The helical transmembrane segment at 24 to 46 (LSNARLVLGVGGAAMLGIATLAV) threads the bilayer. Topologically, residues 47–463 (KRMYDRAISA…LSEPEVLLQT (417 aa)) are cytoplasmic. Residues 49–195 (MYDRAISAPT…LSGSLYDDLQ (147 aa)) form a dimerization region. Phosphoserine occurs at positions 55, 59, 79, and 94. The interval 57 to 77 (PTSPTRLSHSGKRSWEEPNWM) is disordered. The tract at residues 96–123 (QTLPTDSSTFDTDTFCPPRPKPVARKGQ) is disordered. Positions 100–110 (TDSSTFDTDTF) are enriched in low complexity. The interval 160 to 169 (AAVDICAELR) is important for interaction with DNM1L. The ADP site is built by S187, S189, and H201. An important for interaction with DNM1L region spans residues 234 to 242 (RRENPEYFP). Positions 340, 342, and 368 each coordinate ADP.

It belongs to the SMCR7 family. In terms of assembly, homodimer. Interacts with DNM1L. In terms of tissue distribution, expression is relatively high in heart, skeletal muscle, pancreas and kidney.

It is found in the mitochondrion outer membrane. Its function is as follows. Mitochondrial outer membrane protein which regulates mitochondrial fission/fusion dynamics. Promotes the recruitment and association of the fission mediator dynamin-related protein 1 (DNM1L) to the mitochondrial surface independently of the mitochondrial fission FIS1 and MFF proteins. Regulates DNM1L GTPase activity and DNM1L oligomerization. Binds ADP and can also bind GDP, although with lower affinity. Does not bind CDP, UDP, ATP, AMP or GTP. Inhibits DNM1L GTPase activity in the absence of bound ADP. Requires ADP to stimulate DNM1L GTPase activity and the assembly of DNM1L into long, oligomeric tubules with a spiral pattern, as opposed to the ring-like DNM1L oligomers observed in the absence of bound ADP. Does not require ADP for its function in recruiting DNM1L. The chain is Mitochondrial dynamics protein MIEF1 from Homo sapiens (Human).